The chain runs to 340 residues: tRNA N6-adenosine threonylcarbamoyltransferase (340 aa).

His-113 and His-117 together coordinate Fe cation. Substrate is bound by residues 135–139, Asp-169, Gly-182, Asp-186, and Asn-274; that span reads LVSGG. Asp-302 serves as a coordination point for Fe cation.

It belongs to the KAE1 / TsaD family. Fe(2+) serves as cofactor.

The protein resides in the cytoplasm. It carries out the reaction L-threonylcarbamoyladenylate + adenosine(37) in tRNA = N(6)-L-threonylcarbamoyladenosine(37) in tRNA + AMP + H(+). Functionally, required for the formation of a threonylcarbamoyl group on adenosine at position 37 (t(6)A37) in tRNAs that read codons beginning with adenine. Is involved in the transfer of the threonylcarbamoyl moiety of threonylcarbamoyl-AMP (TC-AMP) to the N6 group of A37, together with TsaE and TsaB. TsaD likely plays a direct catalytic role in this reaction. This is tRNA N6-adenosine threonylcarbamoyltransferase from Mycolicibacterium vanbaalenii (strain DSM 7251 / JCM 13017 / BCRC 16820 / KCTC 9966 / NRRL B-24157 / PYR-1) (Mycobacterium vanbaalenii).